Reading from the N-terminus, the 64-residue chain is Cytochrome b-c1 complex subunit 9 (64 aa).

At 2 to 21 (VAPTLTARLYSLLFRRTSTF) the chain is on the mitochondrial matrix side. Residues 22-47 (ALTIVVGALFFERAFDQGADAIYEHI) form a helical membrane-spanning segment. Topologically, residues 48 to 64 (NEGKLWKHIKHKYENKE) are mitochondrial intermembrane.

The protein belongs to the UQCR10/QCR9 family. As to quaternary structure, component of the ubiquinol-cytochrome c oxidoreductase (cytochrome b-c1 complex, complex III, CIII), a multisubunit enzyme composed of 11 subunits. The complex is composed of 3 respiratory subunits cytochrome b, cytochrome c1 and Rieske protein UQCRFS1, 2 core protein subunits UQCRC1/QCR1 and UQCRC2/QCR2, and 6 low-molecular weight protein subunits UQCRH/QCR6, UQCRB/QCR7, UQCRQ/QCR8, UQCR10/QCR9, UQCR11/QCR10 and subunit 9, the cleavage product of Rieske protein UQCRFS1. The complex exists as an obligatory dimer and forms supercomplexes (SCs) in the inner mitochondrial membrane with NADH-ubiquinone oxidoreductase (complex I, CI) and cytochrome c oxidase (complex IV, CIV), resulting in different assemblies (supercomplex SCI(1)III(2)IV(1) and megacomplex MCI(2)III(2)IV(2)). Interacts with STMP1.

Its subcellular location is the mitochondrion inner membrane. Functionally, component of the ubiquinol-cytochrome c oxidoreductase, a multisubunit transmembrane complex that is part of the mitochondrial electron transport chain which drives oxidative phosphorylation. The respiratory chain contains 3 multisubunit complexes succinate dehydrogenase (complex II, CII), ubiquinol-cytochrome c oxidoreductase (cytochrome b-c1 complex, complex III, CIII) and cytochrome c oxidase (complex IV, CIV), that cooperate to transfer electrons derived from NADH and succinate to molecular oxygen, creating an electrochemical gradient over the inner membrane that drives transmembrane transport and the ATP synthase. The cytochrome b-c1 complex catalyzes electron transfer from ubiquinol to cytochrome c, linking this redox reaction to translocation of protons across the mitochondrial inner membrane, with protons being carried across the membrane as hydrogens on the quinol. In the process called Q cycle, 2 protons are consumed from the matrix, 4 protons are released into the intermembrane space and 2 electrons are passed to cytochrome c. The chain is Cytochrome b-c1 complex subunit 9 (UQCR10) from Bos taurus (Bovine).